The primary structure comprises 227 residues: Small ribosomal subunit protein uS3 (227 aa).

The KH type-2 domain maps to 39 to 108 (IRKFIEERYK…EVIVNVDEVK (70 aa)).

Belongs to the universal ribosomal protein uS3 family. As to quaternary structure, part of the 30S ribosomal subunit. Forms a tight complex with proteins S10 and S14.

In terms of biological role, binds the lower part of the 30S subunit head. Binds mRNA in the 70S ribosome, positioning it for translation. The polypeptide is Small ribosomal subunit protein uS3 (Sulfurihydrogenibium sp. (strain YO3AOP1)).